We begin with the raw amino-acid sequence, 518 residues long: Wax ester synthase/diacylglycerol acyltransferase 6 (518 aa).

Basic and acidic residues predominate over residues 1–17; the sequence is MEIKTRRDTSETSVRKD. Residues 1 to 29 form a disordered region; it reads MEIKTRRDTSETSVRKDDEEEVEEEQPLS. At 1–213 the chain is on the cytoplasmic side; it reads MEIKTRRDTS…LMAGSRGDSR (213 aa). Catalysis depends on His-163, which acts as the Proton acceptor. Positions 185–205 are disordered; it reads PDELPSLPNQNRSSSRSSRLM. The chain crosses the membrane as a helical span at residues 214-234; the sequence is FLWLVMVIWSAIMLVLNTVCD. The Lumenal segment spans residues 235–518; the sequence is ALEFIATTMF…VQERDSRSLD (284 aa). N-linked (GlcNAc...) asparagine glycosylation is present at Asn-430.

In the N-terminal section; belongs to the long-chain O-acyltransferase family. In terms of tissue distribution, expressed in roots, stems, leaves, flowers and siliques.

It is found in the cell membrane. The protein localises to the endoplasmic reticulum membrane. It localises to the golgi apparatus membrane. The catalysed reaction is an acyl-CoA + a 1,2-diacyl-sn-glycerol = a triacyl-sn-glycerol + CoA. The enzyme catalyses a long chain fatty alcohol + a fatty acyl-CoA = a wax ester + CoA. The protein operates within glycerolipid metabolism; triacylglycerol biosynthesis. It functions in the pathway lipid metabolism. In terms of biological role, bifunctional wax ester synthase/diacylglycerol acyltransferase that uses acyl-CoAs with 16, 18 and 20 carbons as substrates, preferably in combination with 16:0ol alcohol. Involved in cuticular wax biosynthesis. The polypeptide is Wax ester synthase/diacylglycerol acyltransferase 6 (Arabidopsis thaliana (Mouse-ear cress)).